A 504-amino-acid polypeptide reads, in one-letter code: Activin receptor type-1 (504 aa).

The first 16 residues, 1–16 (MALPVLLLLLALPSRS), serve as a signal peptide directing secretion. Residues 17-119 (VQDEELKLNE…EAAGYSMETL (103 aa)) are Extracellular-facing. A glycan (N-linked (GlcNAc...) asparagine) is linked at N94. The helical transmembrane segment at 120–140 (IIVILAPVVVLVIFSVVAVLI) threads the bilayer. Residues 141–504 (IRRIQKNHME…NSLDKLKADC (364 aa)) lie on the Cytoplasmic side of the membrane. Positions 173-202 (STLADLLDHSCTSGSGSGLPFLVQRTVARQ) constitute a GS domain. The region spanning 203–497 (ITLVECVGKG…KTLTKIDNSL (295 aa)) is the Protein kinase domain. ATP-binding positions include 209–217 (VGKGRYGEV) and K230. D331 acts as the Proton acceptor in catalysis.

It belongs to the protein kinase superfamily. TKL Ser/Thr protein kinase family. TGFB receptor subfamily. Requires Mg(2+) as cofactor. It depends on Mn(2+) as a cofactor.

It is found in the membrane. It carries out the reaction L-threonyl-[receptor-protein] + ATP = O-phospho-L-threonyl-[receptor-protein] + ADP + H(+). The enzyme catalyses L-seryl-[receptor-protein] + ATP = O-phospho-L-seryl-[receptor-protein] + ADP + H(+). Functionally, on ligand binding, forms a receptor complex consisting of two type II and two type I transmembrane serine/threonine kinases. Type II receptors phosphorylate and activate type I receptors which autophosphorylate, then bind and activate SMAD transcriptional regulators. Receptor for activin. The protein is Activin receptor type-1 (ACVR1) of Gallus gallus (Chicken).